The sequence spans 312 residues: CD-NTase-associated protein 12 (312 aa).

Residues R5–D127 enclose the TIR domain.

It in the C-terminal section; belongs to the bacterial STING family. Forms homodimers; in the presence of c-di-GMP forms filaments with an ordered array of parallel-stacked subunits.

It carries out the reaction NAD(+) + H2O = ADP-D-ribose + nicotinamide + H(+). With respect to regulation, NAD(+) hydrolase activity is strongly stimulated by c-di-GMP, weakly by 3'3'-cGAMP, very weakly by c-di-AMP but not at all by 2'3'-cGAMP. Self-association of TIR domains is required for NADase activity. Its function is as follows. Effector protein of a CBASS antiviral system with NAD(+) hydrolase activity. CBASS (cyclic oligonucleotide-based antiphage signaling system) provides immunity against bacteriophage. The CD-NTase protein synthesizes cyclic nucleotides in response to infection; these serve as specific second messenger signals. The signals activate a diverse range of effectors, leading to bacterial cell death and thus abortive phage infection. A type I-D CBASS(GG) system. In terms of biological role, binds c-di-GMP, does not bind cUMP-AMP. Upon activation by c-di-GMP forms filaments which hydrolyze NAD(+); filament formation is required for enzyme activation. The polypeptide is CD-NTase-associated protein 12 (Niabella drilacis (strain DSM 25811 / CCM 8410 / CCUG 62505 / LMG 26954 / E90)).